A 168-amino-acid polypeptide reads, in one-letter code: S-ribosylhomocysteine lyase (168 aa).

Residues H54, H58, and C128 each contribute to the Fe cation site.

The protein belongs to the LuxS family. Homodimer. Fe cation serves as cofactor.

The enzyme catalyses S-(5-deoxy-D-ribos-5-yl)-L-homocysteine = (S)-4,5-dihydroxypentane-2,3-dione + L-homocysteine. In terms of biological role, involved in the synthesis of autoinducer 2 (AI-2) which is secreted by bacteria and is used to communicate both the cell density and the metabolic potential of the environment. The regulation of gene expression in response to changes in cell density is called quorum sensing. Catalyzes the transformation of S-ribosylhomocysteine (RHC) to homocysteine (HC) and 4,5-dihydroxy-2,3-pentadione (DPD). The protein is S-ribosylhomocysteine lyase of Neisseria meningitidis serogroup C (strain 053442).